Reading from the N-terminus, the 164-residue chain is Dynein regulatory complex protein 8 (164 aa).

EF-hand domains lie at Glu-16 to Cys-51 and Ala-94 to Pro-129.

Belongs to the DRC8 family. Component of the nexin-dynein regulatory complex (N-DRC).

The protein resides in the cytoplasm. The protein localises to the cytoskeleton. It is found in the flagellum axoneme. Component of the nexin-dynein regulatory complex (N-DRC), a key regulator of ciliary/flagellar motility which maintains the alignment and integrity of the distal axoneme and regulates microtubule sliding in motile axonemes. The chain is Dynein regulatory complex protein 8 (Efcab2) from Mus musculus (Mouse).